Reading from the N-terminus, the 98-residue chain is NADH-ubiquinone oxidoreductase chain 4L (98 aa).

3 helical membrane passes run 2 to 22, 29 to 49, and 61 to 81; these read PSIS…MLMF, SLLC…LIIL, and ILLL…LVMV.

This sequence belongs to the complex I subunit 4L family. In terms of assembly, core subunit of respiratory chain NADH dehydrogenase (Complex I) which is composed of 45 different subunits.

It localises to the mitochondrion inner membrane. It carries out the reaction a ubiquinone + NADH + 5 H(+)(in) = a ubiquinol + NAD(+) + 4 H(+)(out). Core subunit of the mitochondrial membrane respiratory chain NADH dehydrogenase (Complex I) which catalyzes electron transfer from NADH through the respiratory chain, using ubiquinone as an electron acceptor. Part of the enzyme membrane arm which is embedded in the lipid bilayer and involved in proton translocation. This is NADH-ubiquinone oxidoreductase chain 4L (MT-ND4L) from Microcebus griseorufus (Gray-brown mouse lemur).